Consider the following 393-residue polypeptide: Pre-mRNA splicing factor SR-like 1 (393 aa).

The interval 173–393 is disordered; it reads MNLPTKPSGS…VIKLGGSSWR (221 aa). Over residues 249-312 the composition is skewed to basic and acidic residues; that stretch reads QSRDYYSDRD…RNDYEDDRSR (64 aa). The short motif at 301-308 is the Nuclear localization signal element; sequence SRRNDYED. Basic residues predominate over residues 313–325; it reads HDRRSRSRSRSRS. Composition is skewed to basic and acidic residues over residues 329–346 and 356–385; these read QIER…KEKS and KLKD…EEVI.

The protein belongs to the PRP38 family. In terms of processing, phosphorylated. In terms of tissue distribution, mostly expressed in siliques and leaves, also present in seedlings, flowers and stems, and, at low levels, in roots.

The protein resides in the nucleus. In terms of biological role, may be required for pre-mRNA splicing. Confers salt tolerance to LiCl and NaCl. This chain is Pre-mRNA splicing factor SR-like 1, found in Arabidopsis thaliana (Mouse-ear cress).